We begin with the raw amino-acid sequence, 435 residues long: Transforming growth factor beta-2 proprotein (435 aa).

Residues methionine 1–serine 20 form the signal peptide. N-linked (GlcNAc...) asparagine glycosylation is found at asparagine 72, asparagine 140, and asparagine 241. Cystine bridges form between cysteine 309/cysteine 318, cysteine 317/cysteine 380, cysteine 346/cysteine 411, and cysteine 350/cysteine 413.

The protein belongs to the TGF-beta family. Interacts with the serine proteases, HTRA1 and HTRA3. Interacts with ASPN. Interacts with MFAP5. As to quaternary structure, interacts with Transforming growth factor beta-2 (TGF-beta-2) chain; interaction is non-covalent and maintains (TGF-beta-2) in a latent state. Interacts with LRRC32/GARP; leading to regulate activation of TGF-beta-2. Interacts with NREP; the interaction results in a decrease in TGFB2 autoinduction. In terms of assembly, transforming growth factor beta-2: Homodimer; disulfide-linked. Transforming growth factor beta-2: Interacts with TGF-beta receptors (TGFBR1 and TGFBR2), leading to signal transduction. The precursor proprotein is cleaved in the Golgi apparatus to form Transforming growth factor beta-2 (TGF-beta-2) and Latency-associated peptide (LAP) chains, which remain non-covalently linked, rendering TGF-beta-2 inactive.

It localises to the secreted. The protein localises to the extracellular space. The protein resides in the extracellular matrix. Its function is as follows. Precursor of the Latency-associated peptide (LAP) and Transforming growth factor beta-2 (TGF-beta-2) chains, which constitute the regulatory and active subunit of TGF-beta-2, respectively. In terms of biological role, required to maintain the Transforming growth factor beta-2 (TGF-beta-2) chain in a latent state during storage in extracellular matrix. Associates non-covalently with TGF-beta-2 and regulates its activation via interaction with 'milieu molecules', such as LTBP1 and LRRC32/GARP, that control activation of TGF-beta-2. Multifunctional protein that regulates various processes such as angiogenesis and heart development. Activation into mature form follows different steps: following cleavage of the proprotein in the Golgi apparatus, Latency-associated peptide (LAP) and Transforming growth factor beta-2 (TGF-beta-2) chains remain non-covalently linked rendering TGF-beta-2 inactive during storage in extracellular matrix. At the same time, LAP chain interacts with 'milieu molecules', such as LTBP1 and LRRC32/GARP, that control activation of TGF-beta-2 and maintain it in a latent state during storage in extracellular milieus. Once activated following release of LAP, TGF-beta-2 acts by binding to TGF-beta receptors (TGFBR1 and TGFBR2), which transduce signal. The protein is Transforming growth factor beta-2 proprotein (TGFB2) of Sus scrofa (Pig).